The chain runs to 357 residues: Arginine kinase (357 aa).

Alanine 2 bears the N-acetylalanine mark. Positions 9-91 constitute a Phosphagen kinase N-terminal domain; the sequence is KLDEGFKKLE…FDPIIEDYHK (83 aa). 64–68 serves as a coordination point for L-arginine; it reads GVGVY. The region spanning 119–356 is the Phosphagen kinase C-terminal domain; it reads FVISTRVRCG…LELIKIEKEM (238 aa). ATP-binding positions include 122-126 and histidine 185; that span reads STRVR. An L-arginine-binding site is contributed by glutamate 225. Arginine 229 is an ATP binding site. Cysteine 271 contacts L-arginine. ATP contacts are provided by residues 280 to 284 and 309 to 314; these read RASVH and RGTRGE. Residue glutamate 314 coordinates L-arginine.

The protein belongs to the ATP:guanido phosphotransferase family.

The catalysed reaction is L-arginine + ATP = N(omega)-phospho-L-arginine + ADP + H(+). This is Arginine kinase from Eriocheir sinensis (Chinese mitten crab).